Reading from the N-terminus, the 372-residue chain is Glutamate 5-kinase (372 aa).

An ATP-binding site is contributed by K14. Positions 54, 141, and 153 each coordinate substrate. An ATP-binding site is contributed by 173-174 (TD). Residues 280–358 (RGHVVIDDGA…GEIESVLGYM (79 aa)) enclose the PUA domain.

It belongs to the glutamate 5-kinase family.

The protein resides in the cytoplasm. It carries out the reaction L-glutamate + ATP = L-glutamyl 5-phosphate + ADP. The protein operates within amino-acid biosynthesis; L-proline biosynthesis; L-glutamate 5-semialdehyde from L-glutamate: step 1/2. Its function is as follows. Catalyzes the transfer of a phosphate group to glutamate to form L-glutamate 5-phosphate. This is Glutamate 5-kinase from Paraburkholderia xenovorans (strain LB400).